A 269-amino-acid polypeptide reads, in one-letter code: Transcription factor MYB7 (269 aa).

2 HTH myb-type domains span residues 9-61 (KEHM…INYL) and 62-116 (RPDL…KRKL). 2 DNA-binding regions (H-T-H motif) span residues 37 to 61 (WRSL…INYL) and 89 to 112 (WSLI…NTHI).

Interacts with SAD2. As to expression, expressed in anthers. Expressed in pollen grains and mature seeds. Expressed in roots and vasculature of leaves.

It is found in the nucleus. Transcription factor involved in the negative regulation of flavonol biosynthesis. Represses the early phenylpropanoid genes, phenylalanine ammonia-lyase (PAL), cinnamate 4-hydroxylase (C4H) and 4-coumarate-CoA ligase (4CL), as well as the flavonoid-specific genes, flavonoid 3'-hydroxylase (F3'H) and dihydroflavonol 4-reductase (DFR). Plays a role in seed germination inhibition. Negatively regulates the expression of the abscisic acid (ABA) signaling transcription factor ABI5 in seeds. This Arabidopsis thaliana (Mouse-ear cress) protein is Transcription factor MYB7.